A 296-amino-acid chain; its full sequence is Nucleotide-binding protein Rmet_0297 (296 aa).

8-15 lines the ATP pocket; it reads GISGSGKS. 57-60 lines the GTP pocket; sequence DIRS.

It belongs to the RapZ-like family.

Functionally, displays ATPase and GTPase activities. This is Nucleotide-binding protein Rmet_0297 from Cupriavidus metallidurans (strain ATCC 43123 / DSM 2839 / NBRC 102507 / CH34) (Ralstonia metallidurans).